A 431-amino-acid polypeptide reads, in one-letter code: Enolase (431 aa).

Gln162 contacts (2R)-2-phosphoglycerate. The Proton donor role is filled by Glu204. Residues Asp241, Glu288, and Asp315 each contribute to the Mg(2+) site. Residues Lys340, Arg369, Ser370, and Lys391 each contribute to the (2R)-2-phosphoglycerate site. Catalysis depends on Lys340, which acts as the Proton acceptor.

Belongs to the enolase family. Mg(2+) serves as cofactor.

The protein resides in the cytoplasm. It is found in the secreted. It localises to the cell surface. The enzyme catalyses (2R)-2-phosphoglycerate = phosphoenolpyruvate + H2O. Its pathway is carbohydrate degradation; glycolysis; pyruvate from D-glyceraldehyde 3-phosphate: step 4/5. Its function is as follows. Catalyzes the reversible conversion of 2-phosphoglycerate (2-PG) into phosphoenolpyruvate (PEP). It is essential for the degradation of carbohydrates via glycolysis. The polypeptide is Enolase (Phocaeicola vulgatus (strain ATCC 8482 / DSM 1447 / JCM 5826 / CCUG 4940 / NBRC 14291 / NCTC 11154) (Bacteroides vulgatus)).